Reading from the N-terminus, the 29-residue chain is Dermaseptin-J6 (29 aa).

Valine amide is present on valine 29.

In terms of tissue distribution, expressed by the skin glands.

It localises to the secreted. Its function is as follows. Has antimicrobial activity. The sequence is that of Dermaseptin-J6 from Phasmahyla jandaia (Jandaia leaf frog).